The chain runs to 483 residues: tRNA sulfurtransferase (483 aa).

The THUMP domain maps to 63–167 (GQLIDMLART…DDQVYLVTKK (105 aa)). ATP is bound by residues 185 to 186 (LI), Lys-267, Gly-289, and Gln-298. A disulfide bridge links Cys-346 with Cys-457. One can recognise a Rhodanese domain in the interval 405–483 (LPVSAKVIDI…GYTNVGVYRP (79 aa)). The active-site Cysteine persulfide intermediate is Cys-457.

This sequence belongs to the ThiI family.

It localises to the cytoplasm. It carries out the reaction [ThiI sulfur-carrier protein]-S-sulfanyl-L-cysteine + a uridine in tRNA + 2 reduced [2Fe-2S]-[ferredoxin] + ATP + H(+) = [ThiI sulfur-carrier protein]-L-cysteine + a 4-thiouridine in tRNA + 2 oxidized [2Fe-2S]-[ferredoxin] + AMP + diphosphate. It catalyses the reaction [ThiS sulfur-carrier protein]-C-terminal Gly-Gly-AMP + S-sulfanyl-L-cysteinyl-[cysteine desulfurase] + AH2 = [ThiS sulfur-carrier protein]-C-terminal-Gly-aminoethanethioate + L-cysteinyl-[cysteine desulfurase] + A + AMP + 2 H(+). It functions in the pathway cofactor biosynthesis; thiamine diphosphate biosynthesis. Catalyzes the ATP-dependent transfer of a sulfur to tRNA to produce 4-thiouridine in position 8 of tRNAs, which functions as a near-UV photosensor. Also catalyzes the transfer of sulfur to the sulfur carrier protein ThiS, forming ThiS-thiocarboxylate. This is a step in the synthesis of thiazole, in the thiamine biosynthesis pathway. The sulfur is donated as persulfide by IscS. The sequence is that of tRNA sulfurtransferase from Saccharophagus degradans (strain 2-40 / ATCC 43961 / DSM 17024).